The chain runs to 506 residues: 2-isopropylmalate synthase (506 aa).

The region spanning 4–266 (ILFMDTTLRD…EPSMTLKEIK (263 aa)) is the Pyruvate carboxyltransferase domain. Residues aspartate 13, histidine 201, histidine 203, and asparagine 237 each coordinate Mn(2+). A regulatory domain region spans residues 390-506 (NITQLQVHFV…KLKSFIQLVK (117 aa)).

Belongs to the alpha-IPM synthase/homocitrate synthase family. LeuA type 1 subfamily. Homodimer. Requires Mn(2+) as cofactor.

The protein localises to the cytoplasm. It catalyses the reaction 3-methyl-2-oxobutanoate + acetyl-CoA + H2O = (2S)-2-isopropylmalate + CoA + H(+). Its pathway is amino-acid biosynthesis; L-leucine biosynthesis; L-leucine from 3-methyl-2-oxobutanoate: step 1/4. Catalyzes the condensation of the acetyl group of acetyl-CoA with 3-methyl-2-oxobutanoate (2-ketoisovalerate) to form 3-carboxy-3-hydroxy-4-methylpentanoate (2-isopropylmalate). The chain is 2-isopropylmalate synthase from Bacillus cereus (strain ZK / E33L).